The chain runs to 751 residues: MLDTVAVAAEDPHHDQPWADLGLKADEYARIREILGRRPTSSELAMYSVMWSEHCSYKSSKVHLKQFSELAEVLAQRQPDAGRLLAGIGENAGVVDIGQGYAVTFKVESHNHPSYVEPYQGAATGVGGIVRDILAMGARPVAVMDPLRFGPLDADDTHRVLPGIVAGVGGYGNCLGLPNIGGEAVFDATYLGNPLVNALCVGVLRHEDLHLAKASGVGNQVILYGARTGGDGIGGVSVLASETFDADGPAKRPSVQVGDPFMEKLLIECTLEIFAAGLVAGIQDLGGAGLSCATSELASAGDGGMHVELDRVPLRDSTLAPEEILMSESQERMMAVVEPDDVAAFLAICAKWDVEAVVVGEVTDTGRLQIDWHGERVVDVPPRSVAHDGPTYHRPFARPAWQDDLQADAAESLPRPGSGDELRKTLLTLVASPNLCDKSWITDQYDRYVRGNTVLAQPSDSGMVRVDEETDLGVALATDCNGRFALLDPYAGAQLALAEAYRNVATGGATPLAISDCLNFGSPEDPAVMWQFAEACRGLKDGCLELGIPVTGGNVSLYNQTGETAILPTPVVAVLGVIEDVTRRTPSAWSTGGERVFLLGETREELSGSEWAHVVHGHLGGLPPQLDLEAERTLAELLHDAVGLVSSAHDLSDGGLAQALVEGALRHGVGVSVEVPDDAFVGLFSESPGRVVVTVPDGAAERLVELAERHGVELTALGVTGGDALVVEGQFEIPLDELRDAWTTTLPAALG.

Residue H54 is part of the active site. Y57 and K106 together coordinate ATP. E108 is a Mg(2+) binding site. Residues 109 to 112 (SHNH) and R131 each bind substrate. Catalysis depends on H110, which acts as the Proton acceptor. D132 serves as a coordination point for Mg(2+). A substrate-binding site is contributed by Q256. D284 contacts Mg(2+). 328–330 (ESQ) contributes to the substrate binding site. Residues D516 and G553 each contribute to the ATP site. N554 is a binding site for Mg(2+). S556 serves as a coordination point for substrate.

Belongs to the FGAMS family. In terms of assembly, monomer. Part of the FGAM synthase complex composed of 1 PurL, 1 PurQ and 2 PurS subunits.

It localises to the cytoplasm. It catalyses the reaction N(2)-formyl-N(1)-(5-phospho-beta-D-ribosyl)glycinamide + L-glutamine + ATP + H2O = 2-formamido-N(1)-(5-O-phospho-beta-D-ribosyl)acetamidine + L-glutamate + ADP + phosphate + H(+). The protein operates within purine metabolism; IMP biosynthesis via de novo pathway; 5-amino-1-(5-phospho-D-ribosyl)imidazole from N(2)-formyl-N(1)-(5-phospho-D-ribosyl)glycinamide: step 1/2. Functionally, part of the phosphoribosylformylglycinamidine synthase complex involved in the purines biosynthetic pathway. Catalyzes the ATP-dependent conversion of formylglycinamide ribonucleotide (FGAR) and glutamine to yield formylglycinamidine ribonucleotide (FGAM) and glutamate. The FGAM synthase complex is composed of three subunits. PurQ produces an ammonia molecule by converting glutamine to glutamate. PurL transfers the ammonia molecule to FGAR to form FGAM in an ATP-dependent manner. PurS interacts with PurQ and PurL and is thought to assist in the transfer of the ammonia molecule from PurQ to PurL. The sequence is that of Phosphoribosylformylglycinamidine synthase subunit PurL from Nocardioides sp. (strain ATCC BAA-499 / JS614).